Here is a 221-residue protein sequence, read N- to C-terminus: Sugar transporter SWEET1 (221 aa).

7 helical membrane-spanning segments follow: residues 3–23, 42–62, 68–88, 96–116, 129–149, 160–180, and 186–206; these read AGGF…LGMF, VQFL…SYGA, ILIV…LAYL, VVLL…GYFW, LGLF…ADLA, LSYP…LYGF, and YIMV…WLFW. The region spanning 10-94 is the MtN3/slv 1 domain; it reads LIYGACVVFT…LAYLHYCPRK (85 aa). One can recognise a MtN3/slv 2 domain in the interval 127–212; sequence QQLGLFCSVF…WLFWKYPQEQ (86 aa). The segment at 149–221 is mediates interaction with TRPV2; the sequence is AKVIQTKSTQ…QDRNYWLLQT (73 aa).

This sequence belongs to the SWEET sugar transporter family. In terms of assembly, interacts with TRPV2; the interaction probably occurs intracellularly and depends on TRPV2 N-glycosylation. In terms of tissue distribution, ubiquitously expressed with highest expression in oviduct, epididymis and intestine.

The protein localises to the golgi apparatus membrane. The protein resides in the cell membrane. Mediates sugar transport across membranes. May stimulate V(D)J recombination by the activation of RAG1. In Homo sapiens (Human), this protein is Sugar transporter SWEET1 (SLC50A1).